Consider the following 463-residue polypeptide: Argininosuccinate lyase (463 aa).

3 residues coordinate 2-(N(omega)-L-arginino)succinate: Ser27, Asn115, and Thr161. The active-site Proton acceptor is His162. Residue Ser283 is the Proton donor of the active site. Positions 291, 323, 328, and 331 each coordinate 2-(N(omega)-L-arginino)succinate.

The protein belongs to the lyase 1 family. Argininosuccinate lyase subfamily. Homotetramer.

It carries out the reaction 2-(N(omega)-L-arginino)succinate = fumarate + L-arginine. Its pathway is amino-acid biosynthesis; L-arginine biosynthesis; L-arginine from L-ornithine and carbamoyl phosphate: step 3/3. This Saccharomyces paradoxus (Yeast) protein is Argininosuccinate lyase (ARG4).